Consider the following 599-residue polypeptide: MSQTAYRTHHATEVTEALVGQKVTLAGWVDRRRDHGGVAFIDLRDSTGLVQVVIYDEDMARPLRSEFVIQITGEVRLRPDGNENTHLATGKIEVVAETIEILAKSDALPFQVSTALENESENKLPGEDVRLKYRYLDLRRPSMQHNLKLRSDMAKAARHALEDMDFTEVETPTFIKSTPEGARDFVVPARLVPGSWYALPQSPQLLKQLLMVSGVERYYQLARCYRDEDFRADRQPEFTQLDMEMAYVDQEDVMAMTEKVIAAIWKSAGYEVQLPLPRITWKDAMDKYGSDKPDLRFGNPLVELTEYFKNTPFRVFQAPYVGAVVFKGGAATPRRQFDAWQDWARQRGAKGLAYVVFGENGELKGPVAKNLSDEERNGLREAVGAEEGDAVFFAAGSRESAQLLLGAVRVELASREGLLDPKKFAFTWVVDFPLFKPTDDPDDDDVAVGHSKWTSMHHPFTMPSKDWIDKFDKDPEHAMSDSYDIVCNGEEMGGGSVRIHRDDIQARVLDVLGITKEEADEKFGFLLEAFKYGAPPHAGLALGWDRTVSILAGADSIRDVIAFPKAGGGRDPLTGAPAPISDEQRAETGVDYDPDADEN.

Glutamate 180 serves as a coordination point for L-aspartate. The interval 204 to 207 is aspartate; that stretch reads QLLK. Arginine 226 contributes to the L-aspartate binding site. Residues 226-228 and glutamine 235 each bind ATP; that span reads RDE. Histidine 457 serves as a coordination point for L-aspartate. Glutamate 491 contributes to the ATP binding site. L-aspartate is bound at residue arginine 498. An ATP-binding site is contributed by 543-546; it reads GWDR. Positions 565–599 are disordered; that stretch reads KAGGGRDPLTGAPAPISDEQRAETGVDYDPDADEN. The span at 590–599 shows a compositional bias: acidic residues; sequence VDYDPDADEN.

The protein belongs to the class-II aminoacyl-tRNA synthetase family. Type 1 subfamily. Homodimer.

It is found in the cytoplasm. It carries out the reaction tRNA(Asx) + L-aspartate + ATP = L-aspartyl-tRNA(Asx) + AMP + diphosphate. In terms of biological role, aspartyl-tRNA synthetase with relaxed tRNA specificity since it is able to aspartylate not only its cognate tRNA(Asp) but also tRNA(Asn). Reaction proceeds in two steps: L-aspartate is first activated by ATP to form Asp-AMP and then transferred to the acceptor end of tRNA(Asp/Asn). This Bifidobacterium longum (strain DJO10A) protein is Aspartate--tRNA(Asp/Asn) ligase.